A 194-amino-acid polypeptide reads, in one-letter code: GTP cyclohydrolase-2 (194 aa).

47-51 (RVHSE) lines the GTP pocket. Zn(2+) is bound by residues cysteine 52, cysteine 63, and cysteine 65. Residues glutamine 68, 90-92 (EGR), and threonine 112 each bind GTP. The Proton acceptor role is filled by aspartate 124. Arginine 126 (nucleophile) is an active-site residue. GTP is bound by residues threonine 147 and lysine 152.

Belongs to the GTP cyclohydrolase II family. As to quaternary structure, homodimer. It depends on Zn(2+) as a cofactor.

The enzyme catalyses GTP + 4 H2O = 2,5-diamino-6-hydroxy-4-(5-phosphoribosylamino)-pyrimidine + formate + 2 phosphate + 3 H(+). The protein operates within cofactor biosynthesis; riboflavin biosynthesis; 5-amino-6-(D-ribitylamino)uracil from GTP: step 1/4. Catalyzes the conversion of GTP to 2,5-diamino-6-ribosylamino-4(3H)-pyrimidinone 5'-phosphate (DARP), formate and pyrophosphate. The protein is GTP cyclohydrolase-2 of Buchnera aphidicola subsp. Acyrthosiphon pisum (strain APS) (Acyrthosiphon pisum symbiotic bacterium).